The chain runs to 396 residues: MRVLITGCGSRGDTEPLVALAARLRELGADARMCLPPDYVERCAEVGVPMVPVGRAVRAGAREPGELPPGAAEVVTEVVAEWFDKVPAAIEGCDAVVTTGLLPAAVAVRSMAEKLGIPYRYTVLSPDHLPSEQSQAERDMYNQGADRLFGDAVNSHRASIGLPPVEHLYDYGYTDQPWLAADPVLSPLRPTDLGTVQTGAWILPDERPLSAELEAFLAAGSTPVYVGFGSSSRPATADAAKMAIKAVRASGRRIVLSRGWADLVLPDDGADCFVVGEVNLQELFGRVAAAIHHDSAGTTLLAMRAGIPQIVVRRVVDNVVEQAYHADRVAELGVGVAVDGPVPTIDSLSAALDTALAPEIRARATTVADTIRADGTTVAAQLLFDAVSLEKPTVPA.

10–12 (SRG) contacts dTDP-beta-L-4-epi-vancosamine. The devancoaminyl-vancomycin site is built by Asp127, Gln133, Tyr141, and Tyr169. DTDP-beta-L-4-epi-vancosamine-binding positions include Arg207, Ser230, 277–278 (EV), and 293–298 (HDSAGT).

This sequence belongs to the glycosyltransferase 28 family.

The catalysed reaction is dTDP-beta-L-4-epi-vancosamine + devancoaminyl-vancomycin = chloroorienticin B + dTDP + H(+). The protein operates within antibiotic biosynthesis; vancomycin biosynthesis. Its function is as follows. Catalyzes the attachment of 4-epi-vancosamine from a TDP donor to the beta-OH-Tyr-6 of the aglycone cosubstrate in the biosynthesis of glycopeptide antibiotic chloroeremomycin, a member of the vancomycin group of antibiotics. Strongly prefers devancoaminyl-vancomycin (DVV) as substrate rather than the heptapeptide vancomycin aglycone (AGV). Acts downstream of GtfB. In Amycolatopsis orientalis (Nocardia orientalis), this protein is dTDP-epi-vancosaminyltransferase (gtfA).